The following is a 421-amino-acid chain: Imidazolonepropionase (421 aa).

Fe(3+) contacts are provided by histidine 80 and histidine 82. Zn(2+) is bound by residues histidine 80 and histidine 82. Residues arginine 89, tyrosine 152, and histidine 185 each coordinate 4-imidazolone-5-propanoate. An N-formimidoyl-L-glutamate-binding site is contributed by tyrosine 152. Residue histidine 249 coordinates Fe(3+). Histidine 249 is a binding site for Zn(2+). Glutamate 252 provides a ligand contact to 4-imidazolone-5-propanoate. A Fe(3+)-binding site is contributed by aspartate 324. Aspartate 324 contacts Zn(2+). The N-formimidoyl-L-glutamate site is built by asparagine 326 and glycine 328. Serine 329 is a binding site for 4-imidazolone-5-propanoate.

This sequence belongs to the metallo-dependent hydrolases superfamily. HutI family. The cofactor is Zn(2+). Requires Fe(3+) as cofactor.

The protein localises to the cytoplasm. The enzyme catalyses 4-imidazolone-5-propanoate + H2O = N-formimidoyl-L-glutamate. It participates in amino-acid degradation; L-histidine degradation into L-glutamate; N-formimidoyl-L-glutamate from L-histidine: step 3/3. In terms of biological role, catalyzes the hydrolytic cleavage of the carbon-nitrogen bond in imidazolone-5-propanoate to yield N-formimidoyl-L-glutamate. It is the third step in the universal histidine degradation pathway. This chain is Imidazolonepropionase, found in Bacillus velezensis (strain DSM 23117 / BGSC 10A6 / LMG 26770 / FZB42) (Bacillus amyloliquefaciens subsp. plantarum).